The following is a 290-amino-acid chain: Shikimate dehydrogenase (NADP(+)) (290 aa).

Shikimate contacts are provided by residues Ser24 to Ser26 and Thr71. Lys75 acts as the Proton acceptor in catalysis. Shikimate is bound by residues Asn96 and Asp111. Residues Gly136 to Ala140, Asn160 to Arg165, and Leu233 contribute to the NADP(+) site. Position 235 (Tyr235) interacts with shikimate. Residue Gly256 participates in NADP(+) binding.

The protein belongs to the shikimate dehydrogenase family. As to quaternary structure, homodimer.

It carries out the reaction shikimate + NADP(+) = 3-dehydroshikimate + NADPH + H(+). Its pathway is metabolic intermediate biosynthesis; chorismate biosynthesis; chorismate from D-erythrose 4-phosphate and phosphoenolpyruvate: step 4/7. Its function is as follows. Involved in the biosynthesis of the chorismate, which leads to the biosynthesis of aromatic amino acids. Catalyzes the reversible NADPH linked reduction of 3-dehydroshikimate (DHSA) to yield shikimate (SA). This Methanopyrus kandleri (strain AV19 / DSM 6324 / JCM 9639 / NBRC 100938) protein is Shikimate dehydrogenase (NADP(+)).